The chain runs to 255 residues: MLQISHLYADYGGKPALEDINLTLESGELLVVLGPSGCGKTTLLNLIAGFVPYQHGSIQLAGKGIQGPGAERGVVFQNEGLLPWRNVQDNVAFGLQLAGVEKMQRLEIAHQMVKKVGLEGAEKRYIWQLSGGQRQRVGIARALAANPQLLLLDEPFGALDAFTRDQIQTLLLKLWQETGKQVLLITHDIEEAVFMATELVLLSPGPGRVLERLPLNFARRFVAGESSRSIKSDPQFIAMREYVLSRVFEQREAFS.

Residues 2–229 (LQISHLYADY…RFVAGESSRS (228 aa)) enclose the ABC transporter domain. 34 to 41 (GPSGCGKT) is a binding site for ATP.

Belongs to the ABC transporter superfamily. Taurine importer (TC 3.A.1.17.1) family. In terms of assembly, the complex is composed of two ATP-binding proteins (TauB), two transmembrane proteins (TauC) and a solute-binding protein (TauA).

The protein localises to the cell inner membrane. It catalyses the reaction taurine(out) + ATP + H2O = taurine(in) + ADP + phosphate + H(+). Functionally, part of the ABC transporter complex TauABC involved in taurine import. Responsible for energy coupling to the transport system. In Escherichia coli O6:H1 (strain CFT073 / ATCC 700928 / UPEC), this protein is Taurine import ATP-binding protein TauB.